The chain runs to 362 residues: 3-isopropylmalate dehydrogenase (362 aa).

Glycine 77–glutamate 88 contributes to the NAD(+) binding site. 4 residues coordinate substrate: arginine 95, arginine 105, arginine 134, and aspartate 223. Aspartate 223, aspartate 248, and aspartate 252 together coordinate Mg(2+). Residue glycine 287 to asparagine 298 coordinates NAD(+).

The protein belongs to the isocitrate and isopropylmalate dehydrogenases family. As to quaternary structure, homodimer. The cofactor is Mg(2+). Mn(2+) serves as cofactor.

Its subcellular location is the cytoplasm. It catalyses the reaction (2R,3S)-3-isopropylmalate + NAD(+) = 4-methyl-2-oxopentanoate + CO2 + NADH. Its pathway is amino-acid biosynthesis; L-leucine biosynthesis; L-leucine from 3-methyl-2-oxobutanoate: step 3/4. In terms of biological role, catalyzes the oxidation of 3-carboxy-2-hydroxy-4-methylpentanoate (3-isopropylmalate) to 3-carboxy-4-methyl-2-oxopentanoate. The product decarboxylates to 4-methyl-2 oxopentanoate. The sequence is that of 3-isopropylmalate dehydrogenase (LEU2) from Blastobotrys adeninivorans (Yeast).